Here is a 505-residue protein sequence, read N- to C-terminus: Kinesin light chain 3 (505 aa).

The interval 1 to 20 (MSVQVAAPGSTGLGPERLNP) is disordered. The stretch at 90–150 (ALSAHVGVLE…EEEKSHLQFL (61 aa)) forms a coiled coil. Positions 154 to 197 (RQYDPPEESQRPDSPPRRDSLASLFPSEEEEKKGPEAAGAAAAQ) are disordered. A compositionally biased stretch (basic and acidic residues) spans 161 to 173 (ESQRPDSPPRRDS). Ser173 is modified (phosphoserine). TPR repeat units lie at residues 207-240 (LRTL…LERS), 249-282 (ATML…REQT), 291-324 (AATL…REKV), 333-366 (AKQL…YEAL), and 375-408 (AKTK…EALP). The interval 409–439 (APLGAPQGGTAGEAQQQVLRRSSSFSKLRES) is disordered. The segment covering 421-434 (EAQQQVLRRSSSFS) has biased composition (polar residues). At Ser467 the chain carries Phosphoserine. Residues 486 to 505 (QHLNEASRTLSASTQDLSPR) form a disordered region. The residue at position 499 (Thr499) is a Phosphothreonine. Ser503 carries the phosphoserine modification.

Belongs to the kinesin light chain family. In terms of assembly, oligomer composed of two heavy chains and two light chains. Associates with microtubulin in an ATP-dependent manner. Interacts with KIF5C. Interacts with ODF1. Interacts with LRGUK. Interacts with VDAC2. As to expression, expressed in postmeiotic male germ cells (at protein level).

The protein localises to the cytoplasm. It is found in the cytoskeleton. It localises to the mitochondrion. Its function is as follows. Kinesin is a microtubule-associated force-producing protein that may play a role in organelle transport. Plays a role during spermiogenesis in the development of the sperm tail midpiece and in the normal function of spermatozoa. May play a role in the formation of the mitochondrial sheath formation in the developing spermatid midpiece. In Rattus norvegicus (Rat), this protein is Kinesin light chain 3 (Klc3).